Consider the following 263-residue polypeptide: Chymotrypsinogen B2 (263 aa).

Residues 1 to 18 (MAFLWLLSCWALLGTTFG) form the signal peptide. Cystine bridges form between C19/C140, C60/C76, C154/C219, C186/C200, and C209/C238. The Peptidase S1 domain occupies 34–261 (IVNGEDAVPG…LIPWVQKILA (228 aa)). Catalysis depends on charge relay system residues H75 and D120. The active-site Charge relay system is S213.

It belongs to the peptidase S1 family.

It localises to the secreted. The protein resides in the extracellular space. It carries out the reaction Preferential cleavage: Tyr-|-Xaa, Trp-|-Xaa, Phe-|-Xaa, Leu-|-Xaa.. The chain is Chymotrypsinogen B2 (CTRB2) from Homo sapiens (Human).